The following is a 1088-amino-acid chain: Protein argonaute 18 (1088 aa).

Residues M1–P220 are disordered. 6 stretches are compositionally biased toward gly residues: residues G20–R30, Y51–R86, G95–H127, G135–Y148, A161–G182, and G191–S206. A compositionally biased stretch (pro residues) spans Q211 to P220. The PAZ domain maps to T477 to P574. The Piwi domain maps to L747–T1056.

Belongs to the argonaute family. Ago subfamily.

Functionally, probably involved in the RNA silencing pathway. May bind to short RNAs such as microRNAs (miRNAs) or short interfering RNAs (siRNAs), and represses the translation of mRNAs which are complementary to them. The protein is Protein argonaute 18 (AGO18) of Oryza sativa subsp. japonica (Rice).